A 189-amino-acid chain; its full sequence is DAN domain family member 5 (189 aa).

The signal sequence occupies residues Met-1–Gly-22. Asn-38 carries an N-linked (GlcNAc...) asparagine glycan. Intrachain disulfides connect Cys-101/Cys-148, Cys-115/Cys-162, Cys-125/Cys-183, and Cys-129/Cys-185. The 86-residue stretch at Cys-101 to Ser-186 folds into the CTCK domain.

The protein belongs to the DAN family. As to expression, expressed in the retina, in inner segments of photoreceptors, at or close to the outer plexiform layer and in the ganglion cell layer (at protein level).

The protein localises to the secreted. Its function is as follows. Antagonist of the extracellular signaling protein NODAL, which is required for correct left-right patterning during embryonic development. Antagonist of BMP and TGF-beta signaling. Independently of its role in left-right axis establishment, plays a role during heart development, possibly through the regulation of TGF-beta/Nodal signaling pathway. Displays anti-angiogenic activity by inhibiting endothelial sprouting, migration, and proliferation. Once internalized by endothelial cells, may alter their redox and glycolytic balance. This chain is DAN domain family member 5 (DAND5), found in Homo sapiens (Human).